The chain runs to 276 residues: Borealin (276 aa).

Positions 111 to 158 (KEAKSSANSEDENMAPLKSTMKKKKASKKAPSTSKKPRTLSISKQGGT) are disordered.

The protein belongs to the borealin family. In terms of assembly, component of the CPC complex.

Its subcellular location is the nucleus. The protein localises to the chromosome. It localises to the centromere. It is found in the cytoplasm. The protein resides in the cytoskeleton. Its subcellular location is the spindle. Component of the chromosomal passenger complex (CPC), a complex that acts as a key regulator of mitosis. The CPC complex has essential functions at the centromere in ensuring correct chromosome alignment and segregation and is required for chromatin-induced microtubule stabilization and spindle assembly. This Danio rerio (Zebrafish) protein is Borealin (cdca8).